The chain runs to 563 residues: DNA repair protein rhp7 (563 aa).

The segment at 1-101 (MSSGSRVRGP…TDEEAEDNED (101 aa)) is disordered. The span at 39–59 (ESAGQSTGTESEVIQTPTSVE) shows a compositional bias: polar residues. Residues 78-90 (VKRRNLRNQKKKK) are compositionally biased toward basic residues.

The protein belongs to the RAD7 family.

It is found in the nucleus. In terms of biological role, involved in global genome repair (GGR) via nucleotide excision repair (NER), in conjunction with rhp16, after UV irradiation. The chain is DNA repair protein rhp7 (rhp7) from Schizosaccharomyces pombe (strain 972 / ATCC 24843) (Fission yeast).